We begin with the raw amino-acid sequence, 250 residues long: Small ribosomal subunit protein uS2 (250 aa).

Belongs to the universal ribosomal protein uS2 family.

This chain is Small ribosomal subunit protein uS2, found in Delftia acidovorans (strain DSM 14801 / SPH-1).